A 523-amino-acid chain; its full sequence is Inosine-5'-monophosphate dehydrogenase 2 (523 aa).

CBS domains lie at 121-183 (FINN…VQDV) and 184-240 (MTKN…PLAS). Residues 278–280 (DSS) and 328–330 (GMG) each bind NAD(+). 2 residues coordinate K(+): G330 and G332. Position 333 (S333) interacts with IMP. K(+) is bound at residue C335. The Thioimidate intermediate role is filled by C335. Residues 368-370 (DGG), 391-392 (GG), and 415-419 (YRGMG) each bind IMP. The Proton acceptor role is filled by R437. IMP is bound at residue Q449. K(+) is bound by residues E508, G509, and G510.

Belongs to the IMPDH/GMPR family. Homotetramer. Seems to be able to form heterotetramers composed from more than 1 of the 3 IMPDH gene products (IMD2-4). Requires K(+) as cofactor.

The protein resides in the cytoplasm. The enzyme catalyses IMP + NAD(+) + H2O = XMP + NADH + H(+). It functions in the pathway purine metabolism; XMP biosynthesis via de novo pathway; XMP from IMP: step 1/1. Its activity is regulated as follows. Mycophenolic acid (MPA) is a non-competitive inhibitor that prevents formation of the closed enzyme conformation by binding to the same site as the amobile flap. In contrast, mizoribine monophosphate (MZP) is a competitive inhibitor that induces the closed conformation. MPA is a potent inhibitor of mammalian IMPDHs but a poor inhibitor of the bacterial enzymes. MZP is a more potent inhibitor of bacterial IMPDH. Functionally, catalyzes the conversion of inosine 5'-phosphate (IMP) to xanthosine 5'-phosphate (XMP), the first committed and rate-limiting step in the de novo synthesis of guanine nucleotides, and therefore plays an important role in the regulation of cell growth. In contrast to the other IMPDH alleles IMD3 and IMD4, the enzymatic activity of IMD2 seems to be intrinsically drug resistant. The protein is Inosine-5'-monophosphate dehydrogenase 2 of Saccharomyces cerevisiae (strain ATCC 204508 / S288c) (Baker's yeast).